Here is a 405-residue protein sequence, read N- to C-terminus: Amino acid transporter AVT1I (405 aa).

The next 11 membrane-spanning stretches (helical) occupy residues 22–42 (CFNALNALSGIGILSVPYSLA), 46–66 (WLSLSLLLLLAVTAFYTSLLI), 93–113 (IIVSVFMHLELYLVTTGFLIL), 140–160 (FMATVAFVIMPTLWWDNLSVL), 169–189 (LATTVTLGSISWIGAFDGIGF), 201–221 (IPTALSLYAFCYGAHPVLPTL), 234–254 (VLLICFILCTIGYTSMAVLGY), 278–298 (VAIYTTLVNPVAKYALMITPT), 318–338 (LLISTFFIISSVVIAETLPFF), 343–363 (SLVGALLSVTVSILLPCLCYL), and 377–397 (IMLFGMVVMSVFVGVIGTYIA).

Belongs to the amino acid/polyamine transporter 2 family. Amino acid/auxin permease (AAAP) (TC 2.A.18.5) subfamily.

It is found in the membrane. The sequence is that of Amino acid transporter AVT1I from Arabidopsis thaliana (Mouse-ear cress).